The chain runs to 188 residues: Elongation factor P (188 aa).

K34 is subject to N6-(3,6-diaminohexanoyl)-5-hydroxylysine.

Belongs to the elongation factor P family. May be beta-lysylated on the epsilon-amino group of Lys-34 by the combined action of EpmA and EpmB, and then hydroxylated on the C5 position of the same residue by EpmC (if this protein is present). Lysylation is critical for the stimulatory effect of EF-P on peptide-bond formation. The lysylation moiety may extend toward the peptidyltransferase center and stabilize the terminal 3-CCA end of the tRNA. Hydroxylation of the C5 position on Lys-34 may allow additional potential stabilizing hydrogen-bond interactions with the P-tRNA.

Its subcellular location is the cytoplasm. It functions in the pathway protein biosynthesis; polypeptide chain elongation. Functionally, involved in peptide bond synthesis. Alleviates ribosome stalling that occurs when 3 or more consecutive Pro residues or the sequence PPG is present in a protein, possibly by augmenting the peptidyl transferase activity of the ribosome. Modification of Lys-34 is required for alleviation. This is Elongation factor P from Vibrio cholerae serotype O1 (strain ATCC 39541 / Classical Ogawa 395 / O395).